The following is a 236-amino-acid chain: 2,3,4,5-tetrahydropyridine-2,6-dicarboxylate N-acetyltransferase (236 aa).

Belongs to the transferase hexapeptide repeat family. DapH subfamily.

The catalysed reaction is (S)-2,3,4,5-tetrahydrodipicolinate + acetyl-CoA + H2O = L-2-acetamido-6-oxoheptanedioate + CoA. Its pathway is amino-acid biosynthesis; L-lysine biosynthesis via DAP pathway; LL-2,6-diaminopimelate from (S)-tetrahydrodipicolinate (acetylase route): step 1/3. In terms of biological role, catalyzes the transfer of an acetyl group from acetyl-CoA to tetrahydrodipicolinate. This Bacillus pumilus (strain SAFR-032) protein is 2,3,4,5-tetrahydropyridine-2,6-dicarboxylate N-acetyltransferase.